The chain runs to 408 residues: UPF0761 membrane protein NMC0462 (408 aa).

Helical transmembrane passes span 43 to 63 (LLALVPVLTVMVAVASIFPVF), 100 to 120 (LTAIGSVMLVVTSLMLIRTID), 139 to 159 (FLVYWALLTFGPLSLGVGISF), 176 to 196 (WSGALRTAATLTFMTLLLWGL), 210 to 230 (AFVGALATAFCLETARSLFTW), and 248 to 268 (VPFFLLWLNLLWTLVLGGAVL).

Belongs to the UPF0761 family.

It localises to the cell inner membrane. In Neisseria meningitidis serogroup C / serotype 2a (strain ATCC 700532 / DSM 15464 / FAM18), this protein is UPF0761 membrane protein NMC0462.